Consider the following 351-residue polypeptide: Pentatricopeptide repeat-containing protein At3g56030, mitochondrial (351 aa).

A mitochondrion-targeting transit peptide spans 1-41 (MFRLKPLISVDLNQTMSLLRRFVKEANNSRFLLQSISGRSF). 4 PPR repeats span residues 124–158 (RKHS…EFGL), 159–193 (STCV…AIPV), 194–224 (DVTS…MEEE), and 232–266 (DTRT…GLSV).

This sequence belongs to the PPR family. P subfamily.

Its subcellular location is the mitochondrion. This is Pentatricopeptide repeat-containing protein At3g56030, mitochondrial from Arabidopsis thaliana (Mouse-ear cress).